We begin with the raw amino-acid sequence, 190 residues long: MDILKDKIRSEGIVLSEHVLKVDAFLNHQIDPQLMQQVGHAFAMRFRDQGITKIVTIEASGIAPAVMAGLELGVPVIFARKYQSLTLKDNLYISKVFSFTKQTESTIAISAKHLNAHDHVLVIDDFLANGHAAKALIDLIGQAGASIAGLGIVIEKSFQDGRALLESEGYRVESLARVKSLAGGQVEFLD.

Positions 20 and 27 each coordinate xanthine. 128-132 provides a ligand contact to 5-phospho-alpha-D-ribose 1-diphosphate; the sequence is ANGHA. K156 contributes to the xanthine binding site.

Belongs to the purine/pyrimidine phosphoribosyltransferase family. Xpt subfamily. In terms of assembly, homodimer.

The protein localises to the cytoplasm. The enzyme catalyses XMP + diphosphate = xanthine + 5-phospho-alpha-D-ribose 1-diphosphate. It participates in purine metabolism; XMP biosynthesis via salvage pathway; XMP from xanthine: step 1/1. Its function is as follows. Converts the preformed base xanthine, a product of nucleic acid breakdown, to xanthosine 5'-monophosphate (XMP), so it can be reused for RNA or DNA synthesis. The polypeptide is Xanthine phosphoribosyltransferase (Pseudomonas aeruginosa (strain LESB58)).